The chain runs to 459 residues: Phosphoglucosamine mutase (459 aa).

The Phosphoserine intermediate role is filled by S112. S112, D249, D251, and D253 together coordinate Mg(2+). Phosphoserine is present on S112.

Belongs to the phosphohexose mutase family. Mg(2+) serves as cofactor. Activated by phosphorylation.

It carries out the reaction alpha-D-glucosamine 1-phosphate = D-glucosamine 6-phosphate. Catalyzes the conversion of glucosamine-6-phosphate to glucosamine-1-phosphate. This is Phosphoglucosamine mutase from Synechococcus sp. (strain RCC307).